Here is a 169-residue protein sequence, read N- to C-terminus: MNINTAYFAGGCFWCMTKPFDTFDGIEKVTSGYMGGHIENPTYEQVKSGTSGHLETVEIQYDVALFSYNKLLEIFFSVIDPLDTGGQYQDRGPQYQTAIFYTNDHQKELAETYIEQLKNTINADKAIATKILPASQFYKAEDYHQDFYKKNPERYAEEQKIRQEYKNKQ.

Residue Cys12 is part of the active site.

Belongs to the MsrA Met sulfoxide reductase family.

The catalysed reaction is L-methionyl-[protein] + [thioredoxin]-disulfide + H2O = L-methionyl-(S)-S-oxide-[protein] + [thioredoxin]-dithiol. It carries out the reaction [thioredoxin]-disulfide + L-methionine + H2O = L-methionine (S)-S-oxide + [thioredoxin]-dithiol. Has an important function as a repair enzyme for proteins that have been inactivated by oxidation. Catalyzes the reversible oxidation-reduction of methionine sulfoxide in proteins to methionine. The protein is Peptide methionine sulfoxide reductase MsrA 1 (msrA1) of Staphylococcus aureus (strain Mu50 / ATCC 700699).